Reading from the N-terminus, the 223-residue chain is Adapter protein MecA (223 aa).

It belongs to the MecA family. In terms of assembly, homodimer.

Its function is as follows. Enables the recognition and targeting of unfolded and aggregated proteins to the ClpC protease or to other proteins involved in proteolysis. The chain is Adapter protein MecA from Limosilactobacillus reuteri (strain DSM 20016) (Lactobacillus reuteri).